The chain runs to 630 residues: Adenine DNA glycosylase (630 aa).

Basic and acidic residues predominate over residues 54–72; it reads MRKCREKKEAEREAEREAE. The tract at residues 54 to 123 is disordered; that stretch reads MRKCREKKEA…ALGGDIEDLF (70 aa). The segment covering 73–123 has biased composition (acidic residues); the sequence is REAEEEEKAEEAEAEADKEEAEEESEEEEEEEEEEAEAEEEALGGDIEDLF. Residue Glu-168 is the Proton donor/acceptor of the active site. Residues Cys-341, Cys-348, Cys-351, and Cys-357 each coordinate [4Fe-4S] cluster. The 154-residue stretch at 383 to 536 folds into the Nudix hydrolase domain; the sequence is PRHDFCCVCV…RKVPPFRLQH (154 aa). The Nudix box motif lies at 427-451; it reads VILNEEADSATRRNAINVYLKEAFR.

Belongs to the Nth/MutY family. It depends on [4Fe-4S] cluster as a cofactor.

Its subcellular location is the nucleus. It carries out the reaction Hydrolyzes free adenine bases from 7,8-dihydro-8-oxoguanine:adenine mismatched double-stranded DNA, leaving an apurinic site.. Involved in oxidative DNA damage repair. Initiates repair of A*oxoG to C*G by removing the inappropriately paired adenine base from the DNA backbone. Possesses both adenine and 2-OH-A DNA glycosylase activities. This is Adenine DNA glycosylase (MYH) from Arabidopsis thaliana (Mouse-ear cress).